We begin with the raw amino-acid sequence, 142 residues long: Cell division protein SepF (142 aa).

The protein belongs to the SepF family. As to quaternary structure, homodimer. Interacts with FtsZ.

The protein resides in the cytoplasm. Its function is as follows. Cell division protein that is part of the divisome complex and is recruited early to the Z-ring. Probably stimulates Z-ring formation, perhaps through the cross-linking of FtsZ protofilaments. Its function overlaps with FtsA. This chain is Cell division protein SepF, found in Geobacillus kaustophilus (strain HTA426).